Reading from the N-terminus, the 508-residue chain is 2,3-bisphosphoglycerate-independent phosphoglycerate mutase (508 aa).

Residues Asp-11 and Ser-61 each coordinate Mn(2+). Ser-61 acts as the Phosphoserine intermediate in catalysis. Residues His-122, Arg-150 to Asp-151, Arg-182, Arg-188, Arg-257 to Arg-260, and Lys-332 contribute to the substrate site. Residues Asp-397, His-401, Asp-438, His-439, and His-456 each contribute to the Mn(2+) site.

Belongs to the BPG-independent phosphoglycerate mutase family. Monomer. Mn(2+) serves as cofactor.

The catalysed reaction is (2R)-2-phosphoglycerate = (2R)-3-phosphoglycerate. It functions in the pathway carbohydrate degradation; glycolysis; pyruvate from D-glyceraldehyde 3-phosphate: step 3/5. Functionally, catalyzes the interconversion of 2-phosphoglycerate and 3-phosphoglycerate. This is 2,3-bisphosphoglycerate-independent phosphoglycerate mutase from Mycoplasma pneumoniae (strain ATCC 29342 / M129 / Subtype 1) (Mycoplasmoides pneumoniae).